The primary structure comprises 584 residues: Phenylalanine--tRNA ligase beta subunit (584 aa).

A B5 domain is found at 290 to 369 (FSVRTKTVTH…RALGFNSLEP (80 aa)). Aspartate 347, aspartate 353, aspartate 356, and aspartate 357 together coordinate Mg(2+).

This sequence belongs to the phenylalanyl-tRNA synthetase beta subunit family. Type 2 subfamily. In terms of assembly, tetramer of two alpha and two beta subunits. The cofactor is Mg(2+).

It is found in the cytoplasm. The enzyme catalyses tRNA(Phe) + L-phenylalanine + ATP = L-phenylalanyl-tRNA(Phe) + AMP + diphosphate + H(+). This is Phenylalanine--tRNA ligase beta subunit from Haloarcula marismortui (strain ATCC 43049 / DSM 3752 / JCM 8966 / VKM B-1809) (Halobacterium marismortui).